The sequence spans 396 residues: Elongation factor Tu (396 aa).

Positions 10 to 206 constitute a tr-type G domain; sequence KPHVNVGTIG…ALDSYIPTPE (197 aa). Residues 19–26 are G1; that stretch reads GHVDHGKT. A GTP-binding site is contributed by 19–26; sequence GHVDHGKT. Thr26 serves as a coordination point for Mg(2+). The interval 60-64 is G2; the sequence is GITIN. Residues 81 to 84 form a G3 region; the sequence is DCPG. GTP is bound by residues 81–85 and 136–139; these read DCPGH and NKCD. Residues 136–139 form a G4 region; it reads NKCD. Residues 174-176 are G5; that stretch reads SAL.

This sequence belongs to the TRAFAC class translation factor GTPase superfamily. Classic translation factor GTPase family. EF-Tu/EF-1A subfamily. In terms of assembly, monomer.

It is found in the cytoplasm. The enzyme catalyses GTP + H2O = GDP + phosphate + H(+). Functionally, GTP hydrolase that promotes the GTP-dependent binding of aminoacyl-tRNA to the A-site of ribosomes during protein biosynthesis. The sequence is that of Elongation factor Tu from Aromatoleum aromaticum (strain DSM 19018 / LMG 30748 / EbN1) (Azoarcus sp. (strain EbN1)).